The primary structure comprises 268 residues: Zinc transporter ZupT (268 aa).

The next 5 helical transmembrane spans lie at 6–26 (LAFL…LIAF), 37–57 (SFAL…DIFF), 70–90 (TQGY…IGFI), 125–145 (GLFT…ATFV), and 152–172 (SIGL…GIAV). Residues N136 and E139 each coordinate Fe(2+). E139 and H164 together coordinate Zn(2+). Fe(2+)-binding residues include N165, E168, and E197. A Zn(2+)-binding site is contributed by E168. 2 helical membrane-spanning segments follow: residues 201 to 221 (AIVA…GIIF) and 248 to 268 (MSMY…LLLA).

It belongs to the ZIP transporter (TC 2.A.5) family. ZupT subfamily.

The protein localises to the cell membrane. It carries out the reaction Zn(2+)(in) = Zn(2+)(out). In terms of biological role, mediates zinc uptake. May also transport other divalent cations. This is Zinc transporter ZupT from Oceanobacillus iheyensis (strain DSM 14371 / CIP 107618 / JCM 11309 / KCTC 3954 / HTE831).